Reading from the N-terminus, the 292-residue chain is Protease HtpX homolog (292 aa).

2 helical membrane-spanning segments follow: residues 4 to 24 (IFLF…TLRL) and 42 to 62 (ALLV…LAMS). His-147 lines the Zn(2+) pocket. Glu-148 is an active-site residue. His-151 is a Zn(2+) binding site. Helical transmembrane passes span 158–178 (VTLA…SRII) and 198–218 (FVTS…IVMW). Residue Glu-224 participates in Zn(2+) binding.

This sequence belongs to the peptidase M48B family. Zn(2+) serves as cofactor.

The protein localises to the cell inner membrane. This is Protease HtpX homolog from Nitrosomonas eutropha (strain DSM 101675 / C91 / Nm57).